The chain runs to 429 residues: MKYLRKIINWLSSLKVAIVLLILIALGSALGTALPQGEKAESYLKNYEVTRFLGVINGDLLLQLQLDHVYSSFWFLFLLTWLSFSLIICSWKRQWPSLKKAIDWIDYKEPKQIQKLAISQSFRIQKNDNGINPLANYLENNGWQVKIKSSRLAARKGLIGRVGPPLVHFGLILLIIGATYGVLKGQRLEKFLAPERSLNLLSPNGISKVSVKLTDFKIDRDPTGKPEQFRSKLELHNNNINKSIYEEISVNHPLRFQGITLYQADWSLAAITIQINNSPKIQFPLNKIDELGDQVWGIVLPQMPDSDLKPLLLTLSSEQGPVRFFSEEGNPAGIGRPNGNPILIGTSKISIIDVIPSSGILLKYDPGVPIVYLGFAISLIGSVFSIISTKQLWIIQEEESRLMHIGGLSNRNLSGFANQFNSIIKAAYD.

The next 3 helical transmembrane spans lie at 14-34, 72-92, and 162-182; these read LKVA…GTAL, SFWF…CSWK, and VGPP…TYGV.

It belongs to the Ccs1/CcsB family. As to quaternary structure, may interact with CcsA.

It is found in the cellular thylakoid membrane. Functionally, required during biogenesis of c-type cytochromes (cytochrome c6 and cytochrome f) at the step of heme attachment. The sequence is that of Cytochrome c biogenesis protein CcsB from Prochlorococcus marinus (strain SARG / CCMP1375 / SS120).